The primary structure comprises 499 residues: Cytochrome P450 705A12 (499 aa).

Residues 4-24 (LIIVDFQNISIFILLCLFSFL) form a helical membrane-spanning segment. Position 439 (Cys-439) interacts with heme.

It belongs to the cytochrome P450 family. It depends on heme as a cofactor.

It is found in the membrane. May be involved in hydroxylation of the triterpene marneral. The sequence is that of Cytochrome P450 705A12 from Arabidopsis thaliana (Mouse-ear cress).